We begin with the raw amino-acid sequence, 804 residues long: MEQIITGEGQIVPDLDEHITRSGIDQAGTDYHMVSIIGCQSSGKSTLLNLLFGTKFETMNEQKGRQQTTKGIHAARAVNGPILLFDVEGSDSRERGDSDALFERKSSLFALALSELLVINMWESDIGRYNAANIPMLKTVMEVNVQLFLAQSTSKSKILFVIRDSTIPNFDVIKFQINRDMENIWAEITLPDSLKDKTIHDFFDFDFYAIHHMVIQRDIFDKDISALRQRFIDEKEENYLFKEKSTKVVPGGGLSTYIRNLWEVINENKELNIPSQKLMLSRFKCEENAKAAYDQFKEKVTKTILEPMADESVNLGDKFKSNAEEAIKAANKFYHDNSWRYQQAAVEEFQQKLSTDIGDLLISYYIKHCNYYARQVMQEFTKFISGLPDSFEKGGKWAIEVQAKIDELSLRLDSTCRDSLIEGYKWQFPSFKTIKAMDDARKSYEEIMTKKLYKNIFAEEKIAFDDKASELLMIADQNMWENLRKLIEASAKVTDDRFMEIIKTNVLNPKPQEGTLKRFQRHALNIVKESANYIMMKMKTAFDRSFRYEKNGRPRVWTRRHNLNQIYEESRASGRKVLILFTYCRLASPDDQTPNNPLNQVLIPVEKSQEIEEKFEKLIIHAYEEARASVLASQNNEHIPPWAWFLFLFSCSDYILWWLSNPLLFSLTVLFGGTYLVLNQLGLWDTAVQKLLDIIKKKIVELGATPDENNETETNQTIPVEESQITPPPPTETTTDDGPVMKRRVHRSKAQGLTKTESNVTFANVSNANDEQSLTKNNTEDSLNTGSSSSGQRHRKRVRVGTLV.

The Cytoplasmic segment spans residues methionine 1–histidine 638. The 218-residue stretch at glycine 28 to serine 245 folds into the GB1/RHD3-type G domain. Residue glycine 38–serine 45 coordinates GTP. A helical transmembrane segment spans residues isoleucine 639–leucine 659. At serine 660 to proline 662 the chain is on the lumenal side. The helical transmembrane segment at leucine 663 to leucine 683 threads the bilayer. Over tryptophan 684–valine 804 the chain is Cytoplasmic. The interval proline 706–valine 804 is disordered. Over residues glutamine 751 to glycine 791 the composition is skewed to polar residues. Basic residues predominate over residues glutamine 792–valine 804.

This sequence belongs to the TRAFAC class dynamin-like GTPase superfamily. GB1/RHD3 GTPase family. RHD3 subfamily.

The protein localises to the endoplasmic reticulum membrane. Functionally, probable GTP-binding protein that may be involved in cell development. This is Protein SEY1 homolog 1 from Trichomonas vaginalis (strain ATCC PRA-98 / G3).